An 881-amino-acid chain; its full sequence is Alanine--tRNA ligase (881 aa).

The Zn(2+) site is built by histidine 564, histidine 568, cysteine 666, and histidine 670.

Belongs to the class-II aminoacyl-tRNA synthetase family. It depends on Zn(2+) as a cofactor.

It localises to the cytoplasm. It catalyses the reaction tRNA(Ala) + L-alanine + ATP = L-alanyl-tRNA(Ala) + AMP + diphosphate. Functionally, catalyzes the attachment of alanine to tRNA(Ala) in a two-step reaction: alanine is first activated by ATP to form Ala-AMP and then transferred to the acceptor end of tRNA(Ala). Also edits incorrectly charged Ser-tRNA(Ala) and Gly-tRNA(Ala) via its editing domain. This chain is Alanine--tRNA ligase, found in Caldicellulosiruptor saccharolyticus (strain ATCC 43494 / DSM 8903 / Tp8T 6331).